Reading from the N-terminus, the 504-residue chain is Histidine ammonia-lyase (504 aa).

Positions 142-144 (ASG) form a cross-link, 5-imidazolinone (Ala-Gly). 2,3-didehydroalanine (Ser) is present on serine 143.

This sequence belongs to the PAL/histidase family. Post-translationally, contains an active site 4-methylidene-imidazol-5-one (MIO), which is formed autocatalytically by cyclization and dehydration of residues Ala-Ser-Gly.

The protein resides in the cytoplasm. It carries out the reaction L-histidine = trans-urocanate + NH4(+). Its pathway is amino-acid degradation; L-histidine degradation into L-glutamate; N-formimidoyl-L-glutamate from L-histidine: step 1/3. The chain is Histidine ammonia-lyase from Staphylococcus aureus (strain MSSA476).